Reading from the N-terminus, the 359-residue chain is 3-dehydroquinate synthase (359 aa).

NAD(+) is bound by residues 72-77 (DGEQYK), 106-110 (GVIGD), 130-131 (TT), Lys143, Lys152, and 170-173 (CLKT). Residues Glu185, His248, and His265 each contribute to the Zn(2+) site.

It belongs to the sugar phosphate cyclases superfamily. Dehydroquinate synthase family. Co(2+) is required as a cofactor. It depends on Zn(2+) as a cofactor. NAD(+) serves as cofactor.

It localises to the cytoplasm. It catalyses the reaction 7-phospho-2-dehydro-3-deoxy-D-arabino-heptonate = 3-dehydroquinate + phosphate. Its pathway is metabolic intermediate biosynthesis; chorismate biosynthesis; chorismate from D-erythrose 4-phosphate and phosphoenolpyruvate: step 2/7. Catalyzes the conversion of 3-deoxy-D-arabino-heptulosonate 7-phosphate (DAHP) to dehydroquinate (DHQ). This Photobacterium profundum (strain SS9) protein is 3-dehydroquinate synthase.